A 1000-amino-acid chain; its full sequence is DENN domain-containing protein 2A (1000 aa).

4 disordered regions span residues 1–155 (MLEA…LRFQ), 174–328 (DGSA…RKSY), 427–464 (KLLD…LGDL), and 491–525 (KRVK…LKAH). The segment covering 34 to 43 (QLNSVPNSGP) has biased composition (polar residues). Composition is skewed to basic and acidic residues over residues 56 to 70 (IKDK…KEPP), 79 to 117 (DGQE…DSRA), 140 to 155 (SQHR…LRFQ), and 221 to 237 (HLEV…DWKG). Pro residues-rich tracts occupy residues 249–258 (PPKPFINPVP) and 288–307 (PPLP…PPPT). Residues 427–436 (KLLDTRKLSR) show a composition bias toward basic and acidic residues. The segment covering 496–506 (LSQSTESNSGK) has biased composition (polar residues). Ser544 carries the phosphoserine modification. A uDENN domain is found at 559-708 (EYFVVVSLHK…PFPALGKTII (150 aa)). The 134-residue stretch at 730 to 863 (RLEHVDFESL…LQVALEHILE (134 aa)) folds into the cDENN domain. The 96-residue stretch at 865–960 (RNDLACDQDG…QERELRRQDA (96 aa)) folds into the dDENN domain.

The protein localises to the cytoplasm. The protein resides in the cytoskeleton. Functionally, guanine nucleotide exchange factor (GEF) which may activate RAB9A and RAB9B. Promotes the exchange of GDP to GTP, converting inactive GDP-bound Rab proteins into their active GTP-bound form. May play a role in late endosomes back to trans-Golgi network/TGN transport. The chain is DENN domain-containing protein 2A (Dennd2a) from Mus musculus (Mouse).